A 383-amino-acid polypeptide reads, in one-letter code: Acetylornithine deacetylase (383 aa).

A Zn(2+)-binding site is contributed by histidine 80. Aspartate 82 is a catalytic residue. Aspartate 112 contributes to the Zn(2+) binding site. Residue glutamate 144 is part of the active site. Zn(2+) is bound by residues glutamate 145, glutamate 169, and histidine 355.

This sequence belongs to the peptidase M20A family. ArgE subfamily. As to quaternary structure, homodimer. Zn(2+) is required as a cofactor. The cofactor is Co(2+). It depends on glutathione as a cofactor.

Its subcellular location is the cytoplasm. The catalysed reaction is N(2)-acetyl-L-ornithine + H2O = L-ornithine + acetate. It functions in the pathway amino-acid biosynthesis; L-arginine biosynthesis; L-ornithine from N(2)-acetyl-L-ornithine (linear): step 1/1. Functionally, catalyzes the hydrolysis of the amide bond of N(2)-acetylated L-amino acids. Cleaves the acetyl group from N-acetyl-L-ornithine to form L-ornithine, an intermediate in L-arginine biosynthesis pathway, and a branchpoint in the synthesis of polyamines. The polypeptide is Acetylornithine deacetylase (Salmonella arizonae (strain ATCC BAA-731 / CDC346-86 / RSK2980)).